A 518-amino-acid polypeptide reads, in one-letter code: D-aminopeptidase (518 aa).

S62 (nucleophile) is an active-site residue. The active-site Proton donor/acceptor is K65. The disordered stretch occupies residues 373–392 (FGTGPEKMDISGENEAQSSM). The segment at 477-487 (QRSMDAPSPGE) is important for specificity. D481 is a binding site for substrate.

Belongs to the peptidase S12 family. In terms of assembly, homodimer.

It carries out the reaction Release of an N-terminal D-amino acid from a peptide, Xaa-|-Yaa-, in which Xaa is preferably D-Ala, D-Ser or D-Thr. D-amino acid amides and methyl esters also are hydrolyzed, as is glycine amide.. With respect to regulation, inhibited by beta-lactam compounds such as 6-aminopenicillic acid, 7-aminocephalosporanic acid, benzylpenicillin and ampicillin. Inhibited by p-chloromercuribenzoate. Its function is as follows. Hydrolyzes N-terminal residues in D-amino acid-containing peptides. This is D-aminopeptidase from Brucella melitensis biotype 2 (strain ATCC 23457).